The sequence spans 447 residues: Glutamate-1-semialdehyde 2,1-aminomutase (447 aa).

Lys272 carries the post-translational modification N6-(pyridoxal phosphate)lysine.

It belongs to the class-III pyridoxal-phosphate-dependent aminotransferase family. HemL subfamily. As to quaternary structure, homodimer. Pyridoxal 5'-phosphate is required as a cofactor.

The protein resides in the cytoplasm. It catalyses the reaction (S)-4-amino-5-oxopentanoate = 5-aminolevulinate. It functions in the pathway porphyrin-containing compound metabolism; protoporphyrin-IX biosynthesis; 5-aminolevulinate from L-glutamyl-tRNA(Glu): step 2/2. The chain is Glutamate-1-semialdehyde 2,1-aminomutase from Leifsonia xyli subsp. xyli (strain CTCB07).